A 173-amino-acid chain; its full sequence is UPF0398 protein SMU_470 (173 aa).

The protein belongs to the UPF0398 family.

The polypeptide is UPF0398 protein SMU_470 (Streptococcus mutans serotype c (strain ATCC 700610 / UA159)).